We begin with the raw amino-acid sequence, 170 residues long: Metalloproteinase inhibitor 4 (170 aa).

Residues 1 to 105 form the NTR domain; the sequence is ISSEKVVPAS…SLNHHYHLNC (105 aa). Involved in metalloproteinase-binding stretches follow at residues 6 to 9 and 48 to 49; these read VVPA and SS. 3 disulfides stabilise this stretch: C107–C154, C112–C117, and C125–C146.

Belongs to the protease inhibitor I35 (TIMP) family.

The protein localises to the secreted. Complexes with metalloproteinases (such as collagenases) and irreversibly inactivates them by binding to their catalytic zinc cofactor. This chain is Metalloproteinase inhibitor 4 (TIMP4), found in Oryctolagus cuniculus (Rabbit).